A 297-amino-acid chain; its full sequence is Pyrroline-5-carboxylate reductase 1 (297 aa).

It belongs to the pyrroline-5-carboxylate reductase family.

The protein localises to the cytoplasm. The enzyme catalyses L-proline + NADP(+) = (S)-1-pyrroline-5-carboxylate + NADPH + 2 H(+). It catalyses the reaction L-proline + NAD(+) = (S)-1-pyrroline-5-carboxylate + NADH + 2 H(+). It functions in the pathway amino-acid biosynthesis; L-proline biosynthesis; L-proline from L-glutamate 5-semialdehyde: step 1/1. Functionally, catalyzes the reduction of 1-pyrroline-5-carboxylate (PCA) to L-proline. In Bacillus spizizenii (strain ATCC 23059 / NRRL B-14472 / W23) (Bacillus subtilis subsp. spizizenii), this protein is Pyrroline-5-carboxylate reductase 1 (proH).